Consider the following 472-residue polypeptide: MRTRFAPSPTGFLHVGGARTALFCHLQARHVGGTTVLRIEDTDRERSNQALVDAILDGLHWLGLDPDEGPLFQSDHTQRHTDMALKLLEEGKAYKCYCTKQELDDMRAAQQARKEKPRYDGRCRHRSEPPSDQPYVIRFKTPLEGEVVWPDMVQGTIHIANKELDDLILLRSDGSPTYNLAVVVDDHDMEITHVIRGEDHTSNTPRQIHLFQALGWDVPSYAHIPLLHGEDGSKLSKRHGAVSVLQFREEGFLASALNNYLVRMGWSHGEKEEFTMDEMVALFDVNNVGRSAAIFNTSKLLWLNGVHIRQSGPEQLRGELMWHLQRLGVDNPNPNFIDQIIPGMQERVKTMLEMAQMAMFYFKAPTEYAETAVAKHLHADILPAYAALLEKLHTVTADEWDNGGLERAFKVVMAETGAKMGKIGQPVRIAISGSDIAPGIYDILQLVGRHESLRRLEVLLSFFQQRVHGANG.

A 'HIGH' region motif is present at residues 7 to 17; it reads PSPTGFLHVGG. Zn(2+) contacts are provided by Cys-96, Cys-98, Cys-123, and His-125. The span at 112 to 129 shows a compositional bias: basic and acidic residues; it reads ARKEKPRYDGRCRHRSEP. Positions 112–134 are disordered; sequence ARKEKPRYDGRCRHRSEPPSDQP. Residues 234-238 carry the 'KMSKS' region motif; sequence KLSKR. An ATP-binding site is contributed by Lys-237.

This sequence belongs to the class-I aminoacyl-tRNA synthetase family. Glutamate--tRNA ligase type 1 subfamily. As to quaternary structure, monomer. It depends on Zn(2+) as a cofactor.

It is found in the cytoplasm. It catalyses the reaction tRNA(Glu) + L-glutamate + ATP = L-glutamyl-tRNA(Glu) + AMP + diphosphate. Functionally, catalyzes the attachment of glutamate to tRNA(Glu) in a two-step reaction: glutamate is first activated by ATP to form Glu-AMP and then transferred to the acceptor end of tRNA(Glu). This is Glutamate--tRNA ligase from Magnetococcus marinus (strain ATCC BAA-1437 / JCM 17883 / MC-1).